Consider the following 520-residue polypeptide: Probable kinase 098L (520 aa).

Residues 82-393 (LTSVQSFGSK…NSPLLKKGFV (312 aa)) enclose the Protein kinase domain. ATP is bound by residues 88-96 (FGSKSKQGI) and K111. Residue D205 is the Proton acceptor of the active site. Residues 416 to 442 (QTAQLIETDKEILDNLIDDLELKIVRK) adopt a coiled-coil conformation.

The protein belongs to the protein kinase superfamily.

Functionally, probable kinase. In Aedes vexans (Inland floodwater mosquito), this protein is Probable kinase 098L.